A 482-amino-acid polypeptide reads, in one-letter code: Cytochrome c-552 (482 aa).

Positions 1–26 (MIKVSNALQRILIGAALALFGGGAQA) are cleaved as a signal peptide. Heme c is bound at residue H98. The heme site is built by C126, C129, and K130. The heme c site is built by C164, C167, H168, C213, C216, and H217. Ca(2+) is bound by residues E219, Y220, K265, and Q267. Residue Y220 coordinates substrate. H268 is a substrate binding site. H279, C286, C289, H290, H305, C318, C321, H322, and H397 together coordinate heme c.

It belongs to the cytochrome c-552 family. Ca(2+) serves as cofactor. Requires heme c as cofactor.

The protein localises to the periplasm. The enzyme catalyses 6 Fe(III)-[cytochrome c] + NH4(+) + 2 H2O = 6 Fe(II)-[cytochrome c] + nitrite + 8 H(+). It functions in the pathway nitrogen metabolism; nitrate reduction (assimilation). Functionally, catalyzes the reduction of nitrite to ammonia, consuming six electrons in the process. This is Cytochrome c-552 from Edwardsiella ictaluri (strain 93-146).